An 867-amino-acid polypeptide reads, in one-letter code: Putative tyrosine-protein kinase F09A5.2 (867 aa).

A run of 2 helical transmembrane segments spans residues 45-65 (VMKILSGFSLIIIVVFIFATS) and 355-375 (LLLIIGIPCISLTICCIAFFV). Asn395 and Asn423 each carry an N-linked (GlcNAc...) asparagine glycan. The Protein kinase domain maps to 467–757 (VQEDHLLGNG…FNEMRGEITV (291 aa)). An ATP-binding site is contributed by 473-481 (LGNGAFANV). 2 N-linked (GlcNAc...) asparagine glycosylation sites follow: Asn496 and Asn500. Lys516 is an ATP binding site. Asn585 is a glycosylation site (N-linked (GlcNAc...) asparagine). The active-site Proton acceptor is Asp626. 2 disordered regions span residues 782–821 (LTMQDSKETAPCSTPGGSQDMDEDGDYDSGSEGHSQGTCA) and 848–867 (SKSMRGKRRQSNSTVSTYQS). The segment covering 801–810 (DMDEDGDYDS) has biased composition (acidic residues). The span at 858 to 867 (SNSTVSTYQS) shows a compositional bias: polar residues. N-linked (GlcNAc...) asparagine glycosylation occurs at Asn859.

This sequence belongs to the protein kinase superfamily. Tyr protein kinase family.

The protein localises to the membrane. It carries out the reaction L-tyrosyl-[protein] + ATP = O-phospho-L-tyrosyl-[protein] + ADP + H(+). The protein is Putative tyrosine-protein kinase F09A5.2 of Caenorhabditis elegans.